Here is a 215-residue protein sequence, read N- to C-terminus: uncharacterized protein (215 aa).

3 residues coordinate S-adenosyl-L-methionine: glycine 53, glutamate 74, and aspartate 97.

This sequence belongs to the methyltransferase superfamily. YrrT family.

In terms of biological role, could be a S-adenosyl-L-methionine-dependent methyltransferase. This is an uncharacterized protein from Geobacillus kaustophilus (strain HTA426).